The following is a 319-amino-acid chain: Acetyl-coenzyme A carboxylase carboxyl transferase subunit beta (319 aa).

The 270-residue stretch at 24–293 (LWIKCPDTGQ…MIEQEPEPSA (270 aa)) folds into the CoA carboxyltransferase N-terminal domain. The disordered stretch occupies residues 282–319 (PEMIEQEPEPSAPVPPDEPDEPAATQEAPPAAPAAPPA).

Belongs to the AccD/PCCB family. As to quaternary structure, acetyl-CoA carboxylase is a heterohexamer composed of biotin carboxyl carrier protein (AccB), biotin carboxylase (AccC) and two subunits each of ACCase subunit alpha (AccA) and ACCase subunit beta (AccD).

Its subcellular location is the cytoplasm. It carries out the reaction N(6)-carboxybiotinyl-L-lysyl-[protein] + acetyl-CoA = N(6)-biotinyl-L-lysyl-[protein] + malonyl-CoA. It functions in the pathway lipid metabolism; malonyl-CoA biosynthesis; malonyl-CoA from acetyl-CoA: step 1/1. In terms of biological role, component of the acetyl coenzyme A carboxylase (ACC) complex. Biotin carboxylase (BC) catalyzes the carboxylation of biotin on its carrier protein (BCCP) and then the CO(2) group is transferred by the transcarboxylase to acetyl-CoA to form malonyl-CoA. This Nitrobacter winogradskyi (strain ATCC 25391 / DSM 10237 / CIP 104748 / NCIMB 11846 / Nb-255) protein is Acetyl-coenzyme A carboxylase carboxyl transferase subunit beta.